The chain runs to 276 residues: Ribosomal RNA small subunit methyltransferase A (276 aa).

Residues Asn-27, Leu-29, Gly-54, Glu-75, Asp-101, and Asn-123 each coordinate S-adenosyl-L-methionine.

It belongs to the class I-like SAM-binding methyltransferase superfamily. rRNA adenine N(6)-methyltransferase family. RsmA subfamily.

The protein resides in the cytoplasm. It carries out the reaction adenosine(1518)/adenosine(1519) in 16S rRNA + 4 S-adenosyl-L-methionine = N(6)-dimethyladenosine(1518)/N(6)-dimethyladenosine(1519) in 16S rRNA + 4 S-adenosyl-L-homocysteine + 4 H(+). Its function is as follows. Specifically dimethylates two adjacent adenosines (A1518 and A1519) in the loop of a conserved hairpin near the 3'-end of 16S rRNA in the 30S particle. May play a critical role in biogenesis of 30S subunits. The protein is Ribosomal RNA small subunit methyltransferase A of Bartonella bacilliformis (strain ATCC 35685 / KC583 / Herrer 020/F12,63).